Consider the following 118-residue polypeptide: Large ribosomal subunit protein uL18 (118 aa).

The segment covering 1-10 has biased composition (basic and acidic residues); that stretch reads MKTTRRDATR. Residues 1 to 20 are disordered; the sequence is MKTTRRDATRSRHQRVRRKV. Basic residues predominate over residues 11–20; it reads SRHQRVRRKV.

It belongs to the universal ribosomal protein uL18 family. Part of the 50S ribosomal subunit; part of the 5S rRNA/L5/L18/L25 subcomplex. Contacts the 5S and 23S rRNAs.

Functionally, this is one of the proteins that bind and probably mediate the attachment of the 5S RNA into the large ribosomal subunit, where it forms part of the central protuberance. The chain is Large ribosomal subunit protein uL18 from Acaryochloris marina (strain MBIC 11017).